Reading from the N-terminus, the 198-residue chain is Ras-like protein 2 (198 aa).

Residue 18 to 25 (GDGGVGKS) coordinates GTP. Positions 40 to 48 (YDPTIEDSY) match the Effector region motif. GTP is bound by residues 65–69 (DTAGQ) and 124–127 (NKCD). At Cys195 the chain carries Cysteine methyl ester. Residue Cys195 is the site of S-farnesyl cysteine attachment. The propeptide at 196–198 (IVM) is removed in mature form.

Belongs to the small GTPase superfamily. Ras family.

It localises to the cell membrane. It catalyses the reaction GTP + H2O = GDP + phosphate + H(+). Alternates between an inactive form bound to GDP and an active form bound to GTP. Activated by a guanine nucleotide-exchange factor (GEF) and inactivated by a GTPase-activating protein (GAP). The sequence is that of Ras-like protein 2 (RAS2) from Mucor circinelloides f. lusitanicus (Mucor racemosus var. lusitanicus).